A 215-amino-acid chain; its full sequence is Ribose-5-phosphate isomerase A (215 aa).

Residues 26–29 (TGST), 79–82 (DGAD), and 92–95 (KGGG) each bind substrate. The Proton acceptor role is filled by glutamate 101. Substrate is bound at residue lysine 119.

The protein belongs to the ribose 5-phosphate isomerase family. Homodimer.

It catalyses the reaction aldehydo-D-ribose 5-phosphate = D-ribulose 5-phosphate. The protein operates within carbohydrate degradation; pentose phosphate pathway; D-ribose 5-phosphate from D-ribulose 5-phosphate (non-oxidative stage): step 1/1. Its function is as follows. Catalyzes the reversible conversion of ribose-5-phosphate to ribulose 5-phosphate. The protein is Ribose-5-phosphate isomerase A of Xylella fastidiosa (strain M12).